The sequence spans 170 residues: Peptide deformylase 2 (170 aa).

Residues C94 and H136 each contribute to the Fe cation site. E137 is a catalytic residue. H140 serves as a coordination point for Fe cation.

This sequence belongs to the polypeptide deformylase family. Fe(2+) serves as cofactor.

The catalysed reaction is N-terminal N-formyl-L-methionyl-[peptide] + H2O = N-terminal L-methionyl-[peptide] + formate. Functionally, removes the formyl group from the N-terminal Met of newly synthesized proteins. Requires at least a dipeptide for an efficient rate of reaction. N-terminal L-methionine is a prerequisite for activity but the enzyme has broad specificity at other positions. This Xanthomonas campestris pv. campestris (strain ATCC 33913 / DSM 3586 / NCPPB 528 / LMG 568 / P 25) protein is Peptide deformylase 2.